Consider the following 203-residue polypeptide: Recombination protein RecR (203 aa).

A C4-type zinc finger spans residues 56 to 71 (CAVCGNVSDDERCRIC). The region spanning 79–179 (ALVCVVEEPK…TVTRIASGLP (101 aa)) is the Toprim domain.

The protein belongs to the RecR family.

In terms of biological role, may play a role in DNA repair. It seems to be involved in an RecBC-independent recombinational process of DNA repair. It may act with RecF and RecO. The chain is Recombination protein RecR from Mycobacterium ulcerans (strain Agy99).